The following is a 369-amino-acid chain: Maltose/maltodextrin import ATP-binding protein MalK (369 aa).

The ABC transporter domain occupies valine 4–isoleucine 234. Glycine 36–serine 43 contacts ATP.

The protein belongs to the ABC transporter superfamily. Maltooligosaccharide importer (TC 3.A.1.1.1) family. In terms of assembly, the complex is composed of two ATP-binding proteins (MalK), two transmembrane proteins (MalG and MalK) and a solute-binding protein (MalE).

The protein localises to the cell inner membrane. The catalysed reaction is D-maltose(out) + ATP + H2O = D-maltose(in) + ADP + phosphate + H(+). Part of the ABC transporter complex MalEFGK involved in maltose/maltodextrin import. Responsible for energy coupling to the transport system. The protein is Maltose/maltodextrin import ATP-binding protein MalK of Salmonella typhi.